The chain runs to 203 residues: Urease accessory protein UreG (203 aa).

12–19 contacts GTP; the sequence is GPVGSGKT.

It belongs to the SIMIBI class G3E GTPase family. UreG subfamily. As to quaternary structure, homodimer. UreD, UreF and UreG form a complex that acts as a GTP-hydrolysis-dependent molecular chaperone, activating the urease apoprotein by helping to assemble the nickel containing metallocenter of UreC. The UreE protein probably delivers the nickel.

The protein localises to the cytoplasm. Facilitates the functional incorporation of the urease nickel metallocenter. This process requires GTP hydrolysis, probably effectuated by UreG. The chain is Urease accessory protein UreG from Alteromonas mediterranea (strain DSM 17117 / CIP 110805 / LMG 28347 / Deep ecotype).